The following is a 752-amino-acid chain: DNA ligase (752 aa).

NAD(+) contacts are provided by residues 48 to 52, 97 to 98, and E131; these read DADYD and SL. The N6-AMP-lysine intermediate role is filled by K133. NAD(+)-binding residues include R154, E189, K305, and K329. C434, C437, C452, and C458 together coordinate Zn(2+). The segment covering 599–615 has biased composition (basic and acidic residues); it reads ADEGRRASLQPQRDKAW. Residues 599–618 form a disordered region; that stretch reads ADEGRRASLQPQRDKAWADT. In terms of domain architecture, BRCT spans 673–752; sequence ATQSAVAGLT…EQWLDRIGDA (80 aa).

It belongs to the NAD-dependent DNA ligase family. LigA subfamily. The cofactor is Mg(2+). Mn(2+) serves as cofactor.

It catalyses the reaction NAD(+) + (deoxyribonucleotide)n-3'-hydroxyl + 5'-phospho-(deoxyribonucleotide)m = (deoxyribonucleotide)n+m + AMP + beta-nicotinamide D-nucleotide.. Its function is as follows. DNA ligase that catalyzes the formation of phosphodiester linkages between 5'-phosphoryl and 3'-hydroxyl groups in double-stranded DNA using NAD as a coenzyme and as the energy source for the reaction. It is essential for DNA replication and repair of damaged DNA. The protein is DNA ligase of Jannaschia sp. (strain CCS1).